Here is a 487-residue protein sequence, read N- to C-terminus: Calcium-binding tyrosine phosphorylation-regulated protein (487 aa).

One can recognise an RIIa domain in the interval 12–49; the sequence is YGLKTLLEGISRAVLKTNPSDINQFAAAYFQELTMYRG. Composition is skewed to basic and acidic residues over residues 78 to 91 and 101 to 117; these read KKLECLKEPEKTSV and KSTDTDEDNVTRTEYSD. Disordered stretches follow at residues 78–163, 243–271, and 420–487; these read KKLE…AVSP, VDLGSQPKENEAEQSTASSVPLQDEQEPP, and IVSD…ATAE. The segment covering 140–152 has biased composition (low complexity); it reads SSSKPATPKATTP. 2 stretches are compositionally biased toward polar residues: residues 420 to 436 and 455 to 464; these read IVSDNTGQEESGENSVP and SGTSVKSSSG. The span at 478–487 shows a compositional bias: acidic residues; sequence IEPEGEATAE.

Interacts with FSCB. Post-translationally, phosphorylated on tyrosine residues during in vitro capacitation. Dephosphorylation affects its ability to bind calcium.

The protein resides in the cytoplasm. The protein localises to the cytoskeleton. It localises to the cell projection. Its subcellular location is the cilium. It is found in the flagellum. Functionally, may function as a regulator of both motility- and head-associated functions such as capacitation and the acrosome reaction. May bind calcium in vitro. The sequence is that of Calcium-binding tyrosine phosphorylation-regulated protein (CABYR) from Macaca fascicularis (Crab-eating macaque).